The primary structure comprises 189 residues: Elongation factor P (189 aa).

This sequence belongs to the elongation factor P family.

Its subcellular location is the cytoplasm. Its pathway is protein biosynthesis; polypeptide chain elongation. In terms of biological role, involved in peptide bond synthesis. Stimulates efficient translation and peptide-bond synthesis on native or reconstituted 70S ribosomes in vitro. Probably functions indirectly by altering the affinity of the ribosome for aminoacyl-tRNA, thus increasing their reactivity as acceptors for peptidyl transferase. The sequence is that of Elongation factor P from Rhizobium etli (strain ATCC 51251 / DSM 11541 / JCM 21823 / NBRC 15573 / CFN 42).